The chain runs to 436 residues: WD repeat domain phosphoinositide-interacting protein 2 (436 aa).

A WD 1 repeat occupies 182–222 (AHDSPLAALAFDASGTKLATASEKGTVIRVFSIPEGQKLFE). Residues 223-226 (FRRG) carry the L/FRRG motif motif. WD repeat units lie at residues 228 to 267 (KRCV…EKPQ) and 311 to 349 (GHKN…GGEC).

This sequence belongs to the WD repeat PROPPIN family.

Its subcellular location is the preautophagosomal structure membrane. Functionally, component of the autophagy machinery that controls the major intracellular degradation process by which cytoplasmic materials are packaged into autophagosomes and delivered to lysosomes for degradation. Involved in an early step of the formation of preautophagosomal structures. This is WD repeat domain phosphoinositide-interacting protein 2 (WIPI2) from Gallus gallus (Chicken).